The following is a 689-amino-acid chain: Glycine--tRNA ligase beta subunit (689 aa).

It belongs to the class-II aminoacyl-tRNA synthetase family. As to quaternary structure, tetramer of two alpha and two beta subunits.

The protein resides in the cytoplasm. The enzyme catalyses tRNA(Gly) + glycine + ATP = glycyl-tRNA(Gly) + AMP + diphosphate. The protein is Glycine--tRNA ligase beta subunit of Serratia proteamaculans (strain 568).